Reading from the N-terminus, the 335-residue chain is Ficolin-1 (335 aa).

Positions 1–17 (MWWPMLWAFPVLLCLCS) are cleaved as a signal peptide. A disordered region spans residues 47 to 114 (SCPSFPGPPG…TASPLGQKEL (68 aa)). The region spanning 50–88 (SFPGPPGPKGEPGSPAGRGERGLQGSPGKMGPPGSKGEP) is the Collagen-like domain. Over residues 75–88 (SPGKMGPPGSKGEP) the composition is skewed to low complexity. The Fibrinogen C-terminal domain maps to 117–335 (ALCRRGPRSC…KVAEMKIRAS (219 aa)). 2 disulfides stabilise this stretch: Cys-119/Cys-147 and Cys-126/Cys-154. Positions 123-162 (PRSCKDLLTRGIFLTGWYTIYLPDCRPLTVLCDMDVDGGG) are a domain; contributes to trimerization. Residues 163 to 251 (WTVFQRRVDG…LTLGQFLEGT (89 aa)) form a b domain; contributes to trimerization region. Residue Asp-270 participates in Ca(2+) binding. N-linked (GlcNAc...) asparagine glycosylation occurs at Asn-271. Asp-272 is a binding site for Ca(2+). An intrachain disulfide couples Cys-279 to Cys-292. Residue 291 to 293 (DCH) participates in a carbohydrate binding. The segment at 326 to 335 (KVAEMKIRAS) is p domain.

The protein belongs to the ficolin lectin family. In terms of assembly, homotrimer. Interacts with elastin/ELN. Interacts (via Fibrinogen C-terminal domain) with FFAR2. Interacts with CRP; may regulate monocyte activation by FCN1.

It is found in the secreted. The protein resides in the cell membrane. Its function is as follows. Extracellular lectin functioning as a pattern-recognition receptor in innate immunity. Binds the sugar moieties of pathogen-associated molecular patterns (PAMPs) displayed on microbes and activates the lectin pathway of the complement system. May also activate monocytes through a G protein-coupled receptor, FFAR2, inducing the secretion of interleukin-8/IL-8. Binds preferentially to 9-O-acetylated 2-6-linked sialic acid derivatives and to various glycans containing sialic acid engaged in a 2-3 linkage. The sequence is that of Ficolin-1 (Fcn1) from Rattus norvegicus (Rat).